A 614-amino-acid chain; its full sequence is Phragmoplastin DRP1C (614 aa).

Positions 32–301 constitute a Dynamin-type G domain; it reads WEALPTVAVV…LETVIRQKIP (270 aa). Positions 42-49 are G1 motif; it reads GGQSSGKS. Residue 45 to 50 participates in GTP binding; sequence SSGKSS. Residues 68-70 form a G2 motif region; that stretch reads VTR. Positions 143–146 are G3 motif; sequence DLPG. The interval 212-215 is G4 motif; it reads TKLD. GTP is bound by residues 213–218 and 243–246; these read KLDIMD and NRSQ. Positions 242 to 245 are G5 motif; that stretch reads VNRS. The interval 499 to 519 is disordered; sequence EPEKEKPNPRNAPAPNADPYS. Residues 507–517 are compositionally biased toward low complexity; that stretch reads PRNAPAPNADP. One can recognise a GED domain in the interval 523–614; it reads FRKIGSNVSA…RDDIDAVAWK (92 aa).

The protein belongs to the TRAFAC class dynamin-like GTPase superfamily. Dynamin/Fzo/YdjA family. Forms homodimer and may homooligomerize and heterooligomerize to form the phragmoplastin complex. Binds to PHIP1. As to expression, ubiquitous.

It localises to the cytoplasm. The protein localises to the cytoskeleton. The protein resides in the cell cortex. Its subcellular location is the cytoplasmic vesicle. It is found in the clathrin-coated vesicle. It localises to the phragmoplast. It carries out the reaction GTP + H2O = GDP + phosphate + H(+). In terms of biological role, microtubule-associated force-producing protein that is targeted to the growing edges of the cell plate during cytokinesis. Also plays a major role in plasma membrane maintenance during pollen maturation. Has a GTPase activity. This Arabidopsis thaliana (Mouse-ear cress) protein is Phragmoplastin DRP1C.